A 373-amino-acid chain; its full sequence is UDP-sugar transporter UST74c (373 aa).

A disordered region spans residues 27–49; it reads LEEKMGGSADRSSLLDGSGSKEL. S50 carries the post-translational modification Phosphoserine. The next 8 helical transmembrane spans lie at 89–111, 131–153, 174–196, 206–225, 238–260, 275–297, 302–324, and 329–351; these read HFPS…LGMG, FPLP…TLSL, ILGL…GALL, MRGY…NGVY, YGLM…YVTG, VFVV…TILC, SALT…GMFI, and VFSW…YTYV.

The protein belongs to the TPT transporter family. SLC35D subfamily.

The protein resides in the golgi apparatus membrane. Its function is as follows. Involved in the import of UDP-sugars from the cytoplasm into the Golgi lumen. This is UDP-sugar transporter UST74c (frc) from Drosophila melanogaster (Fruit fly).